The sequence spans 173 residues: N-alpha-acetyltransferase 20 (173 aa).

In terms of domain architecture, N-acetyltransferase spans 2-151; that stretch reads TTIRRFVCDD…DALDMRKALP (150 aa).

Belongs to the acetyltransferase family. ARD1 subfamily.

Functionally, seems to be involved in N-acetylation. This chain is N-alpha-acetyltransferase 20 (nat5), found in Dictyostelium discoideum (Social amoeba).